We begin with the raw amino-acid sequence, 338 residues long: tRNA pseudouridine synthase D (338 aa).

Residue Asp79 is the Nucleophile of the active site. The region spanning 154–303 (GVPNYFGEQR…EEAWRANILY (150 aa)) is the TRUD domain.

This sequence belongs to the pseudouridine synthase TruD family.

It catalyses the reaction uridine(13) in tRNA = pseudouridine(13) in tRNA. Its function is as follows. Responsible for synthesis of pseudouridine from uracil-13 in transfer RNAs. This is tRNA pseudouridine synthase D from Legionella pneumophila (strain Corby).